Reading from the N-terminus, the 438-residue chain is GTPase Der (438 aa).

EngA-type G domains lie at 2 to 164 (HKVA…PEDD) and 173 to 343 (IRIS…EKWQ). Residues 8-15 (GRPNVGKS), 55-59 (DTGGL), 116-119 (NKID), 179-186 (GRPNVGKS), 226-230 (DTAGI), and 288-291 (NKWD) each bind GTP. The 85-residue stretch at 344–428 (SRIGTSELNR…PVRLKWKEKG (85 aa)) folds into the KH-like domain.

The protein belongs to the TRAFAC class TrmE-Era-EngA-EngB-Septin-like GTPase superfamily. EngA (Der) GTPase family. In terms of assembly, associates with the 50S ribosomal subunit.

Its function is as follows. GTPase that plays an essential role in the late steps of ribosome biogenesis. The protein is GTPase Der of Deinococcus radiodurans (strain ATCC 13939 / DSM 20539 / JCM 16871 / CCUG 27074 / LMG 4051 / NBRC 15346 / NCIMB 9279 / VKM B-1422 / R1).